The following is a 403-amino-acid chain: Phosphoserine phosphatase RsbP (403 aa).

Residues 1–42 form the PAS domain; that stretch reads MDKQLNDAPCGFLALSEEGSIIAANRTLIKILDYEPEQVIGQ. The PPM-type phosphatase domain occupies 191–402; it reads QVQIDSYYNA…DDECFILVDV (212 aa).

Mn(2+) serves as cofactor.

The catalysed reaction is O-phospho-L-serine + H2O = L-serine + phosphate. The enzyme catalyses O-phospho-D-serine + H2O = D-serine + phosphate. In terms of biological role, positive regulator of sigma-B activity. Dephosphorylates RsbV in response to energy stress. The protein is Phosphoserine phosphatase RsbP (rsbP) of Bacillus subtilis (strain 168).